The following is a 325-amino-acid chain: Glutarate 2-hydroxylase (325 aa).

Residues histidine 160, aspartate 162, and histidine 292 each coordinate Fe cation.

Belongs to the glutarate hydroxylase family. Homotetramer. The cofactor is Fe(2+).

The catalysed reaction is glutarate + 2-oxoglutarate + O2 = (S)-2-hydroxyglutarate + succinate + CO2. It participates in amino-acid degradation. Functionally, acts as an alpha-ketoglutarate-dependent dioxygenase catalyzing hydroxylation of glutarate (GA) to L-2-hydroxyglutarate (L2HG). Functions in a L-lysine degradation pathway that proceeds via cadaverine, glutarate and L-2-hydroxyglutarate. This is Glutarate 2-hydroxylase from Escherichia coli (strain UTI89 / UPEC).